Reading from the N-terminus, the 760-residue chain is Xaa-Pro dipeptidyl-peptidase (760 aa).

Catalysis depends on charge relay system residues serine 349, aspartate 469, and histidine 499.

This sequence belongs to the peptidase S15 family. Homodimer.

Its subcellular location is the cytoplasm. It catalyses the reaction Hydrolyzes Xaa-Pro-|- bonds to release unblocked, N-terminal dipeptides from substrates including Ala-Pro-|-p-nitroanilide and (sequentially) Tyr-Pro-|-Phe-Pro-|-Gly-Pro-|-Ile.. In terms of biological role, removes N-terminal dipeptides sequentially from polypeptides having unsubstituted N-termini provided that the penultimate residue is proline. This Streptococcus pyogenes serotype M28 (strain MGAS6180) protein is Xaa-Pro dipeptidyl-peptidase.